We begin with the raw amino-acid sequence, 941 residues long: Peroxisomal ATPase PEX6 (941 aa).

Residues 384-391 and 698-705 each bind ATP; these read GIPGCGKR and GPPGTGKT.

The protein belongs to the AAA ATPase family. As to quaternary structure, interacts with PEX1; forming the PEX1-PEX6 AAA ATPase complex, which is composed of a heterohexamer formed by a trimer of PEX1-PEX6 dimers. Interacts with APME9.

It localises to the cytoplasm. It is found in the cytosol. Its subcellular location is the peroxisome membrane. It catalyses the reaction ATP + H2O = ADP + phosphate + H(+). In terms of biological role, component of the PEX1-PEX6 AAA ATPase complex, a protein dislocase complex that mediates the ATP-dependent extraction of the PEX5 receptor from peroxisomal membranes, an essential step for PEX5 recycling. Specifically recognizes PEX5 monoubiquitinated at 'Cys-11', and pulls it out of the peroxisome lumen through the PEX2-PEX10-PEX12 retrotranslocation channel. Extraction by the PEX1-PEX6 AAA ATPase complex is accompanied by unfolding of the TPR repeats and release of bound cargo from PEX5. Required for jasmonate biosynthesis. Necessary for the developmental elimination of obsolete peroxisome matix proteins. This chain is Peroxisomal ATPase PEX6, found in Arabidopsis thaliana (Mouse-ear cress).